A 313-amino-acid chain; its full sequence is Biotin synthase (313 aa).

The region spanning 28–258 (NFGNDIELCS…LFPQARLRLS (231 aa)) is the Radical SAM core domain. Residues C46, C50, and C53 each contribute to the [4Fe-4S] cluster site. Positions 90, 121, 181, and 256 each coordinate [2Fe-2S] cluster.

This sequence belongs to the radical SAM superfamily. Biotin synthase family. Homodimer. Requires [4Fe-4S] cluster as cofactor. [2Fe-2S] cluster serves as cofactor.

It carries out the reaction (4R,5S)-dethiobiotin + (sulfur carrier)-SH + 2 reduced [2Fe-2S]-[ferredoxin] + 2 S-adenosyl-L-methionine = (sulfur carrier)-H + biotin + 2 5'-deoxyadenosine + 2 L-methionine + 2 oxidized [2Fe-2S]-[ferredoxin]. It participates in cofactor biosynthesis; biotin biosynthesis; biotin from 7,8-diaminononanoate: step 2/2. In terms of biological role, catalyzes the conversion of dethiobiotin (DTB) to biotin by the insertion of a sulfur atom into dethiobiotin via a radical-based mechanism. The protein is Biotin synthase of Francisella philomiragia subsp. philomiragia (strain ATCC 25017 / CCUG 19701 / FSC 153 / O#319-036).